An 80-amino-acid chain; its full sequence is UPF0291 protein llmg_1475 (80 aa).

Belongs to the UPF0291 family.

The protein localises to the cytoplasm. This is UPF0291 protein llmg_1475 from Lactococcus lactis subsp. cremoris (strain MG1363).